A 346-amino-acid chain; its full sequence is Phosphoribosylformylglycinamidine cyclo-ligase (346 aa).

This sequence belongs to the AIR synthase family.

The protein localises to the cytoplasm. It carries out the reaction 2-formamido-N(1)-(5-O-phospho-beta-D-ribosyl)acetamidine + ATP = 5-amino-1-(5-phospho-beta-D-ribosyl)imidazole + ADP + phosphate + H(+). Its pathway is purine metabolism; IMP biosynthesis via de novo pathway; 5-amino-1-(5-phospho-D-ribosyl)imidazole from N(2)-formyl-N(1)-(5-phospho-D-ribosyl)glycinamide: step 2/2. In Colwellia psychrerythraea (strain 34H / ATCC BAA-681) (Vibrio psychroerythus), this protein is Phosphoribosylformylglycinamidine cyclo-ligase.